The chain runs to 185 residues: Small ribosomal subunit protein uS4c (185 aa).

Residues 72-134 (MRLDNVIFRL…PTSCNALKGE (63 aa)) form the S4 RNA-binding domain. The disordered stretch occupies residues 132-154 (KGESPGGGETPDHLTASLSEGSR).

The protein belongs to the universal ribosomal protein uS4 family. In terms of assembly, part of the 30S ribosomal subunit. Contacts protein S5. The interaction surface between S4 and S5 is involved in control of translational fidelity.

It localises to the plastid. The protein localises to the chloroplast. Its function is as follows. One of the primary rRNA binding proteins, it binds directly to 16S rRNA where it nucleates assembly of the body of the 30S subunit. In terms of biological role, with S5 and S12 plays an important role in translational accuracy. The protein is Small ribosomal subunit protein uS4c (rps4) of Woodwardia unigemmata (Chainfern).